Consider the following 73-residue polypeptide: Large ribosomal subunit protein uL29 (73 aa).

It belongs to the universal ribosomal protein uL29 family.

This is Large ribosomal subunit protein uL29 (rpl29) from Saccharolobus solfataricus (strain ATCC 35092 / DSM 1617 / JCM 11322 / P2) (Sulfolobus solfataricus).